The primary structure comprises 187 residues: Shikimate kinase (187 aa).

ATP is bound at residue 14 to 19; that stretch reads TSGKST. Mg(2+) is bound at residue S18. Residues D36, R60, and G82 each coordinate substrate. R120 serves as a coordination point for ATP. Residue R147 coordinates substrate.

Belongs to the shikimate kinase family. In terms of assembly, monomer. The cofactor is Mg(2+).

The protein localises to the cytoplasm. It carries out the reaction shikimate + ATP = 3-phosphoshikimate + ADP + H(+). It participates in metabolic intermediate biosynthesis; chorismate biosynthesis; chorismate from D-erythrose 4-phosphate and phosphoenolpyruvate: step 5/7. Its function is as follows. Catalyzes the specific phosphorylation of the 3-hydroxyl group of shikimic acid using ATP as a cosubstrate. The polypeptide is Shikimate kinase (Chloroherpeton thalassium (strain ATCC 35110 / GB-78)).